We begin with the raw amino-acid sequence, 396 residues long: S-adenosylmethionine synthase (396 aa).

Residue His16 participates in ATP binding. Residue Asp18 coordinates Mg(2+). A K(+)-binding site is contributed by Glu44. Residues Glu57 and Gln100 each coordinate L-methionine. Positions 100–110 (QSPDINQGVDR) are flexible loop. Residues 165–167 (DAK), 231–232 (KF), Asp240, 246–247 (RK), Ala263, and Lys267 each bind ATP. L-methionine is bound at residue Asp240. Lys271 provides a ligand contact to L-methionine.

It belongs to the AdoMet synthase family. As to quaternary structure, homotetramer; dimer of dimers. Requires Mg(2+) as cofactor. K(+) serves as cofactor.

The protein resides in the cytoplasm. The enzyme catalyses L-methionine + ATP + H2O = S-adenosyl-L-methionine + phosphate + diphosphate. The protein operates within amino-acid biosynthesis; S-adenosyl-L-methionine biosynthesis; S-adenosyl-L-methionine from L-methionine: step 1/1. Catalyzes the formation of S-adenosylmethionine (AdoMet) from methionine and ATP. The overall synthetic reaction is composed of two sequential steps, AdoMet formation and the subsequent tripolyphosphate hydrolysis which occurs prior to release of AdoMet from the enzyme. In Ectopseudomonas mendocina (strain ymp) (Pseudomonas mendocina), this protein is S-adenosylmethionine synthase.